Consider the following 272-residue polypeptide: uncharacterized protein (272 aa).

The protein belongs to the sodium:galactoside symporter (TC 2.A.2) family.

This is an uncharacterized protein from Pseudescherichia vulneris (Escherichia vulneris).